The sequence spans 856 residues: Translation initiation factor IF-2 (856 aa).

The tr-type G domain maps to 356 to 526; sequence PRAPVVTVMG…LLIADLLELK (171 aa). The interval 365–372 is G1; sequence GHVDHGKT. 365-372 provides a ligand contact to GTP; that stretch reads GHVDHGKT. The interval 390 to 394 is G2; it reads GITQH. The G3 stretch occupies residues 412–415; that stretch reads DTPG. GTP is bound by residues 412–416 and 466–469; these read DTPGH and NKID. The G4 stretch occupies residues 466–469; sequence NKID. The G5 stretch occupies residues 502–504; that stretch reads SAK.

It belongs to the TRAFAC class translation factor GTPase superfamily. Classic translation factor GTPase family. IF-2 subfamily.

Its subcellular location is the cytoplasm. In terms of biological role, one of the essential components for the initiation of protein synthesis. Protects formylmethionyl-tRNA from spontaneous hydrolysis and promotes its binding to the 30S ribosomal subunits. Also involved in the hydrolysis of GTP during the formation of the 70S ribosomal complex. This chain is Translation initiation factor IF-2, found in Ehrlichia ruminantium (strain Gardel).